A 559-amino-acid polypeptide reads, in one-letter code: Prolyl 4-hydroxylase subunit alpha-1 (559 aa).

Positions M1 to A16 are cleaved as a signal peptide. N158 is a glycosylation site (N-linked (GlcNAc...) asparagine). The region spanning T404–E512 is the Fe2OG dioxygenase domain. Residues H422, D424, and H493 each coordinate Fe cation. K503 is a 2-oxoglutarate binding site.

Belongs to the P4HA family. As to quaternary structure, heterotetramer of two alpha chains and two beta chains. Exists either as a phy-1(2)/pdi-2(2) tetramer or as a phy-1/phy-2/pdi-2(2) tetramer. Fe(2+) is required as a cofactor. Requires L-ascorbate as cofactor.

The protein localises to the endoplasmic reticulum lumen. The enzyme catalyses L-prolyl-[collagen] + 2-oxoglutarate + O2 = trans-4-hydroxy-L-prolyl-[collagen] + succinate + CO2. Catalyzes the post-translational formation of 4-hydroxyproline in -Xaa-Pro-Gly- sequences in collagens and other proteins. This chain is Prolyl 4-hydroxylase subunit alpha-1 (dpy-18), found in Caenorhabditis elegans.